A 714-amino-acid chain; its full sequence is Kinesin-like protein KIN-13 (714 aa).

The 63-residue stretch at 1–63 folds into the SAM domain; sequence MSDLVYQWLE…FRLITTLKSR (63 aa). Residues 69 to 81 are compositionally biased toward polar residues; it reads QQPSAPNTGATPQ. Disordered stretches follow at residues 69–109 and 122–161; these read QQPS…NDIQ and GGYE…NPRG. A compositionally biased stretch (low complexity) spans 82–92; it reads SVPSSHVSPHV. Over residues 151–160 the composition is skewed to pro residues; that stretch reads PNAPNPPNPR. Positions 183–515 constitute a Kinesin motor domain; the sequence is RIRVVIRKRP…LRYADRVKEL (333 aa). 273–280 contacts ATP; that stretch reads GQTGSGKS.

Belongs to the TRAFAC class myosin-kinesin ATPase superfamily. Kinesin family. KIN-13 subfamily. Interacts with PLK. Phosphorylated by PLK.

The protein localises to the cytoplasm. It localises to the cytoskeleton. The protein resides in the cell projection. It is found in the cilium. Its subcellular location is the flagellum. The protein localises to the flagellum basal body. It localises to the flagellum axoneme. The protein resides in the spindle. It is found in the chromosome. Its subcellular location is the centromere. The protein localises to the kinetochore. Involved in cell cycle. Involved in formation of flagella, regulation of flagellar length, and formation of median bodies during interphase. Regulates flagellar length in all eight distal flagellar tips by promoting disassembly of the microtubules. Disassembles microtubules at the distal flagellar tips in a length-dependent manner in order to maintain different equilibrium lengths of the four flagellar pairs. Regulates interphase and mitotic microtubule dynamics. Regulates microtubule disassembly dynamics of the dual mitotic spindles and the median body. The chain is Kinesin-like protein KIN-13 from Giardia intestinalis (strain ATCC 50803 / WB clone C6) (Giardia lamblia).